Here is a 425-residue protein sequence, read N- to C-terminus: Serine hydroxymethyltransferase (425 aa).

(6S)-5,6,7,8-tetrahydrofolate-binding positions include leucine 128 and 132 to 134 (GHL). At lysine 237 the chain carries N6-(pyridoxal phosphate)lysine.

The protein belongs to the SHMT family. As to quaternary structure, homodimer. Pyridoxal 5'-phosphate serves as cofactor.

The protein localises to the cytoplasm. It carries out the reaction (6R)-5,10-methylene-5,6,7,8-tetrahydrofolate + glycine + H2O = (6S)-5,6,7,8-tetrahydrofolate + L-serine. It participates in one-carbon metabolism; tetrahydrofolate interconversion. Its pathway is amino-acid biosynthesis; glycine biosynthesis; glycine from L-serine: step 1/1. Catalyzes the reversible interconversion of serine and glycine with tetrahydrofolate (THF) serving as the one-carbon carrier. This reaction serves as the major source of one-carbon groups required for the biosynthesis of purines, thymidylate, methionine, and other important biomolecules. Also exhibits THF-independent aldolase activity toward beta-hydroxyamino acids, producing glycine and aldehydes, via a retro-aldol mechanism. The chain is Serine hydroxymethyltransferase from Wolbachia pipientis wMel.